We begin with the raw amino-acid sequence, 1430 residues long: Caskin-1 (1430 aa).

ANK repeat units lie at residues Asp-48–Ile-77, Lys-81–Val-110, Glu-114–Ile-143, Ser-147–Leu-176, Asn-188–Arg-217, and Lys-220–Val-249. Phosphotyrosine is present on Tyr-253. Residues Ser-281–Lys-347 enclose the SH3 domain. The segment at Arg-348–Pro-372 is disordered. Residue Ser-358 is modified to Phosphoserine. Residues Ile-375–Ser-471 are CASK-binding. Omega-N-methylarginine is present on Arg-398. The segment covering Gln-421–Gly-430 has biased composition (polar residues). The tract at residues Gln-421–Glu-472 is disordered. A phosphoserine mark is found at Ser-423 and Ser-432. SAM domains lie at Lys-474–Pro-537 and His-543–Leu-607. 2 positions are modified to phosphoserine: Ser-635 and Ser-648. Residues Leu-667–Glu-679 are compositionally biased toward low complexity. 4 disordered regions span residues Leu-667–Ser-1001, Gly-1015–Arg-1040, Gly-1055–Leu-1371, and Lys-1388–Thr-1407. Polar residues predominate over residues Asn-683–Glu-711. 2 positions are modified to phosphoserine: Ser-722 and Ser-727. Thr-740 carries the post-translational modification Phosphothreonine. A Phosphoserine modification is found at Ser-790. Pro residues predominate over residues Pro-847–Ala-859. Ser-890, Ser-892, and Ser-988 each carry phosphoserine. Pro residues predominate over residues Gly-1027 to Pro-1036. Thr-1066 carries the post-translational modification Phosphothreonine. At Ser-1068 the chain carries Phosphoserine. A compositionally biased stretch (basic and acidic residues) spans Asp-1147–Asp-1159. Positions Pro-1190–Leu-1214 are enriched in pro residues. The residue at position 1258 (Ser-1258) is a Phosphoserine. Residue Thr-1267 is modified to Phosphothreonine. The span at Thr-1267 to Pro-1282 shows a compositional bias: pro residues. Composition is skewed to low complexity over residues Lys-1283–Pro-1298, Pro-1308–Pro-1326, and Pro-1344–Ser-1358. The residue at position 1362 (Ser-1362) is a Phosphoserine. Residues Lys-1388–Ser-1406 show a composition bias toward basic and acidic residues.

Polymerizes, via the tandem SAM domains, to form long, 8 nM wide fibers, upon which other proteins can assemble. Binds the CaM kinase domain of CASK. Forms a ternary complex with CASK and LIN7A, LIN7B or LIN7C. Competes with APBA1 that forms a similar complex with CASK and LIN7 proteins. The tripartite complex CASKIN1/CASK/LIN7(A/B/C) binds the cytoplasmic tail of NRXN1. Expressed in brain. Localized primarily to the neuropil and enriched in synaptic areas (at protein level).

It localises to the cytoplasm. Functionally, may link the scaffolding protein CASK to downstream intracellular effectors. This Rattus norvegicus (Rat) protein is Caskin-1 (Caskin1).